The chain runs to 344 residues: Selenide, water dikinase (344 aa).

C15 is a catalytic residue. Residues K18 and 46-48 contribute to the ATP site; that span reads TKD. D49 provides a ligand contact to Mg(2+). Residues D66, D89, and 137–139 contribute to the ATP site; that span reads GHS. Position 89 (D89) interacts with Mg(2+). D225 contributes to the Mg(2+) binding site.

It belongs to the selenophosphate synthase 1 family. Class I subfamily. In terms of assembly, homodimer. It depends on Mg(2+) as a cofactor.

The catalysed reaction is hydrogenselenide + ATP + H2O = selenophosphate + AMP + phosphate + 2 H(+). Synthesizes selenophosphate from selenide and ATP. This chain is Selenide, water dikinase, found in Colwellia psychrerythraea (strain 34H / ATCC BAA-681) (Vibrio psychroerythus).